We begin with the raw amino-acid sequence, 644 residues long: ATP-dependent zinc metalloprotease FtsH (644 aa).

Topologically, residues 1 to 4 (MAKN) are cytoplasmic. A helical membrane pass occupies residues 5-25 (LILWLVIAVVLMSVFQSFGPS). Topologically, residues 26-98 (ESNGRKVDYS…VGEPPEEPSL (73 aa)) are periplasmic. A helical transmembrane segment spans residues 99–119 (LASIFISWFPMLLLIGVWIFF). Topologically, residues 120-644 (MRQMQGGGGK…NTMSEQLGDK (525 aa)) are cytoplasmic. An ATP-binding site is contributed by 192–199 (GPPGTGKT). His414 lines the Zn(2+) pocket. Residue Glu415 is part of the active site. Zn(2+) is bound by residues His418 and Asp492. Positions 599 to 644 (RPPAGWEDPNGTNNSDSNGTPQAPRPVDEPRTPNPGNTMSEQLGDK) are disordered. 2 stretches are compositionally biased toward polar residues: residues 608 to 619 (NGTNNSDSNGTP) and 632 to 644 (NPGN…LGDK).

This sequence in the central section; belongs to the AAA ATPase family. The protein in the C-terminal section; belongs to the peptidase M41 family. In terms of assembly, homohexamer. Zn(2+) is required as a cofactor.

It is found in the cell inner membrane. Acts as a processive, ATP-dependent zinc metallopeptidase for both cytoplasmic and membrane proteins. Plays a role in the quality control of integral membrane proteins. The polypeptide is ATP-dependent zinc metalloprotease FtsH (Salmonella typhi).